Consider the following 410-residue polypeptide: Peptidase T (410 aa).

Histidine 79 contributes to the Zn(2+) binding site. Aspartate 81 is a catalytic residue. Residue aspartate 142 coordinates Zn(2+). The Proton acceptor role is filled by glutamate 176. Residues glutamate 177, aspartate 199, and histidine 381 each coordinate Zn(2+).

This sequence belongs to the peptidase M20B family. Requires Zn(2+) as cofactor.

It is found in the cytoplasm. It carries out the reaction Release of the N-terminal residue from a tripeptide.. In terms of biological role, cleaves the N-terminal amino acid of tripeptides. In Bacillus licheniformis (strain ATCC 14580 / DSM 13 / JCM 2505 / CCUG 7422 / NBRC 12200 / NCIMB 9375 / NCTC 10341 / NRRL NRS-1264 / Gibson 46), this protein is Peptidase T.